Consider the following 466-residue polypeptide: Citrate synthase, mitochondrial (466 aa).

Residues 1–27 constitute a mitochondrion transit peptide; it reads MALLTAAARLLGTKNASCLVLAARHAS. An SIFI-degron motif is present at residues 2–21; sequence ALLTAAARLLGTKNASCLVL. The residue at position 57 (Lys57) is an N6-succinyllysine. Lys76 is modified (N6-acetyllysine; alternate). N6-succinyllysine; alternate is present on Lys76. N6-succinyllysine occurs at positions 103 and 193. Residue His301 is part of the active site. Lys321 and Lys327 each carry N6-acetyllysine; alternate. Lys321 and Lys327 each carry N6-succinyllysine; alternate. Residue His347 is part of the active site. Arg356 lines the oxaloacetate pocket. The residue at position 375 (Lys375) is an N6-acetyllysine; alternate. Lys375 is modified (N6-succinyllysine; alternate). Lys382 bears the N6-acetyllysine mark. An N6-acetyllysine; alternate modification is found at Lys393. Lys393 bears the N6-succinyllysine; alternate mark. The residue at position 395 (Lys395) is an N6,N6,N6-trimethyllysine. Residue Asp402 is part of the active site. Residues Arg428 and Arg448 each contribute to the oxaloacetate site. N6-succinyllysine is present on Lys450. N6-acetyllysine; alternate is present on Lys459. At Lys459 the chain carries N6-succinyllysine; alternate.

Belongs to the citrate synthase family. As to quaternary structure, homodimer. In terms of processing, methylated. Trimethylation at Lys-395 by CSKMT decreases citrate synthase activity. Post-translationally, in response to mitochondrial stress, the precursor protein is ubiquitinated by the SIFI complex in the cytoplasm before mitochondrial import, leading to its degradation. Within the SIFI complex, UBR4 initiates ubiquitin chain that are further elongated or branched by KCMF1.

The protein localises to the mitochondrion matrix. The catalysed reaction is oxaloacetate + acetyl-CoA + H2O = citrate + CoA + H(+). It functions in the pathway carbohydrate metabolism; tricarboxylic acid cycle; isocitrate from oxaloacetate: step 1/2. Functionally, key enzyme of the Krebs tricarboxylic acid cycle which catalyzes the synthesis of citrate from acetyl coenzyme A and oxaloacetate. The chain is Citrate synthase, mitochondrial (CS) from Homo sapiens (Human).